The primary structure comprises 243 residues: Geranylgeranylglyceryl phosphate synthase (243 aa).

Residues Asp-29 and Ser-58 each coordinate Mg(2+). Sn-glycerol 1-phosphate is bound by residues 178–184, 209–210, and 231–232; these read YLEAGSG, GG, and GT.

The protein belongs to the GGGP/HepGP synthase family. Group II subfamily. Homodimer. It depends on Mg(2+) as a cofactor.

It catalyses the reaction sn-glycerol 1-phosphate + (2E,6E,10E)-geranylgeranyl diphosphate = sn-3-O-(geranylgeranyl)glycerol 1-phosphate + diphosphate. Prenyltransferase that catalyzes the transfer of the geranylgeranyl moiety of geranylgeranyl diphosphate (GGPP) to the C3 hydroxyl of sn-glycerol-1-phosphate (G1P). In Flavobacterium johnsoniae (strain ATCC 17061 / DSM 2064 / JCM 8514 / BCRC 14874 / CCUG 350202 / NBRC 14942 / NCIMB 11054 / UW101) (Cytophaga johnsonae), this protein is Geranylgeranylglyceryl phosphate synthase.